Reading from the N-terminus, the 580-residue chain is MNRISAISTLVTPLPLLPSCSFVPTRRCYPRRATPYSRRINLKPLTSRIVLLTRRRQLGQIVEEVEAAKKRYGRLNTIVMNSVLEACVHCGNIDLALRMFHEMAEPGGIGVDSISYATILKGLGKARRIDEAFQMLETIEYGTAAGTPKLSSSLIYGLLDALINAGDLRRANGLLARYDILLLDHGTPSVLIYNLLMKGYVNSESPQAAINLLDEMLRLRLEPDRLTYNTLIHACIKCGDLDAAMKFFNDMKEKAEEYYDDFLQPDVVTYTTLVKGFGDATDLLSLQEIFLEMKLCENVFIDRTAFTAVVDAMLKCGSTSGALCVFGEILKRSGANEVLRPKPHLYLSMMRAFAVQGDYGMVRNLYLRLWPDSSGSISKAVQQEADNLLMEAALNDGQLDEALGILLSIVRRWKTIPWTTSGGMAAVRLETLLGFSKSILRPHLLSKVIPSEPIESIMIRFEATRPLLGTLQLKNVAMRFFKEQVVPIVDDRGSCIGLLHREDCNNLDAPLVSMMRSPPTCVSTTTSIGRVVDLVLEKKLKMVIVVHCGNFSGSGYSSKAVGAFTRAQLYRLFESEQKLL.

PPR repeat units lie at residues 76-110 (NTIVMNSVLEACVHCGNIDLALRMFHEMAEPGGIG), 112-142 (DSISYATILKGLGKARRIDEAFQMLETIEYG), 151-181 (SSSLIYGLLDALINAGDLRRANGLLARYDIL), 189-223 (SVLIYNLLMKGYVNSESPQAAINLLDEMLRLRLEP), 224-254 (DRLTYNTLIHACIKCGDLDAAMKFFNDMKEK), 266-296 (DVVTYTTLVKGFGDATDLLSLQEIFLEMKLC), 302-337 (DRTAFTAVVDAMLKCGSTSGALCVFGEILKRSGANE), 342-376 (KPHLYLSMMRAFAVQGDYGMVRNLYLRLWPDSSGS), and 382-417 (QQEADNLLMEAALNDGQLDEALGILLSIVRRWKTIP). The region spanning 486 to 553 (VPIVDDRGSC…IVVHCGNFSG (68 aa)) is the CBS domain.

It belongs to the PPR family. P subfamily.

The polypeptide is Pentatricopeptide repeat-containing protein At5g10690 (CBSPPR1) (Arabidopsis thaliana (Mouse-ear cress)).